A 461-amino-acid chain; its full sequence is Nuclear distribution protein PAC1 (461 aa).

In terms of domain architecture, LisH spans 9-41 (QAEELHKSIIAYLTANNLLDTANTLRAELNLNE). Residues 61–88 (TSVVRLQKKIMDLESRMSAMQAELDNAT) are a coiled coil. 8 WD repeats span residues 114-155 (SHRD…RTIK), 157-197 (HTRA…KNIR), 201-248 (GHDH…CLRT), 251-290 (GHTA…PETK), 312-355 (QYLS…LLTL), 357-396 (GHDN…KCIK), 401-446 (AHER…IRCV), and 448-461 (ATGG…IFAN).

This sequence belongs to the WD repeat LIS1/nudF family. Self-associates. Interacts with NDL1 and dynein.

The protein localises to the cytoplasm. Its subcellular location is the cytoskeleton. It is found in the spindle pole. Its function is as follows. Positively regulates the activity of the minus-end directed microtubule motor protein dynein. May enhance dynein-mediated microtubule sliding by targeting dynein to the microtubule plus end. Required for nuclear migration during vegetative growth as well as development. Required for retrograde early endosome (EE) transport from the hyphal tip. Required for localization of dynein to the mitotic spindle poles. Recruits additional proteins to the dynein complex at SPBs. The chain is Nuclear distribution protein PAC1 from Arthroderma benhamiae (strain ATCC MYA-4681 / CBS 112371) (Trichophyton mentagrophytes).